The chain runs to 432 residues: Glutamate-1-semialdehyde 2,1-aminomutase 1 (432 aa).

An N6-(pyridoxal phosphate)lysine modification is found at Lys272.

The protein belongs to the class-III pyridoxal-phosphate-dependent aminotransferase family. HemL subfamily. As to quaternary structure, homodimer. It depends on pyridoxal 5'-phosphate as a cofactor.

The protein localises to the cytoplasm. The enzyme catalyses (S)-4-amino-5-oxopentanoate = 5-aminolevulinate. The protein operates within porphyrin-containing compound metabolism; protoporphyrin-IX biosynthesis; 5-aminolevulinate from L-glutamyl-tRNA(Glu): step 2/2. In Exiguobacterium sp. (strain ATCC BAA-1283 / AT1b), this protein is Glutamate-1-semialdehyde 2,1-aminomutase 1.